The following is a 354-amino-acid chain: Tribbles homolog 3 (354 aa).

Residues 1–127 (MRATPLAASA…QHVARPTEVL (127 aa)) are interaction with DDIT3/CHOP. Residues 36–61 (RDEPEPGPLPSLLPPSPPPASDLSPA) form a disordered region. The span at 41 to 55 (PGPLPSLLPPSPPPA) shows a compositional bias: pro residues. The 248-residue stretch at 68-315 (LGPYILLERE…ALGILLHPWL (248 aa)) folds into the Protein kinase domain. A compositionally biased stretch (basic and acidic residues) spans 320–333 (GRVSPPQSDRREMD). Residues 320–354 (GRVSPPQSDRREMDQVVPDGPQLEEAEEGEVGLYG) are disordered. A compositionally biased stretch (acidic residues) spans 341–354 (QLEEAEEGEVGLYG).

This sequence belongs to the protein kinase superfamily. CAMK Ser/Thr protein kinase family. Tribbles subfamily. As to quaternary structure, interacts with AKT1, AKT2, MAP2K1 and MAP2K7. Interacts with ATF4. Interacts with DDIT3/CHOP and inhibits its interaction with EP300/P300. Interacts with APOBEC3C. Interacts (via N-terminus) with APOBEC3A. Interacts with RELA. In terms of tissue distribution, highly expressed in liver. Not detected in heart, brain, spleen, lung, skeletal muscle, kidney or testis.

The protein resides in the nucleus. In terms of biological role, inactive protein kinase which acts as a regulator of the integrated stress response (ISR), a process for adaptation to various stress. Inhibits the transcriptional activity of DDIT3/CHOP and is involved in DDIT3/CHOP-dependent cell death during ER stress. May play a role in programmed neuronal cell death but does not appear to affect non-neuronal cells. Acts as a negative feedback regulator of the ATF4-dependent transcription during the ISR: while TRIB3 expression is promoted by ATF4, TRIB3 protein interacts with ATF4 and inhibits ATF4 transcription activity. Disrupts insulin signaling by binding directly to Akt kinases and blocking their activation. May bind directly to and mask the 'Thr-308' phosphorylation site in AKT1. Interacts with the NF-kappa-B transactivator p65 RELA and inhibits its phosphorylation and thus its transcriptional activation activity. Interacts with MAPK kinases and regulates activation of MAP kinases. Can inhibit APOBEC3A editing of nuclear DNA. The polypeptide is Tribbles homolog 3 (Trib3) (Mus musculus (Mouse)).